A 229-amino-acid chain; its full sequence is 2,3-bisphosphoglycerate-dependent phosphoglycerate mutase 2 (229 aa).

Residues 12–19 (RHGESVAN), 25–26 (TG), Arg65, 92–95 (ERHY), Lys103, and 119–120 (RR) contribute to the substrate site. The active-site Tele-phosphohistidine intermediate is the His13. The active-site Proton donor/acceptor is Glu92.

The protein belongs to the phosphoglycerate mutase family. BPG-dependent PGAM subfamily.

The enzyme catalyses (2R)-2-phosphoglycerate = (2R)-3-phosphoglycerate. It functions in the pathway carbohydrate degradation; glycolysis; pyruvate from D-glyceraldehyde 3-phosphate: step 3/5. In terms of biological role, catalyzes the interconversion of 2-phosphoglycerate and 3-phosphoglycerate. This is 2,3-bisphosphoglycerate-dependent phosphoglycerate mutase 2 from Lactobacillus johnsonii (strain CNCM I-12250 / La1 / NCC 533).